Reading from the N-terminus, the 946-residue chain is Probable leucine-rich repeat receptor-like protein kinase At5g49770 (946 aa).

A signal peptide spans 1–25 (MKMSSRIGLFKLLILLFFQIYSVYA). Over 26–561 (FTDGSDFTAL…LEDSKTVSMK (536 aa)) the chain is Extracellular. 14 LRR repeats span residues 67–91 (DNRV…ISTL), 92–116 (SELQ…IGNL), 118–140 (KLTF…IGNL), 141–164 (EQLT…MGRL), 166–191 (KLYW…SLPG), 195–219 (LLQT…LFSS), 221–244 (MTLL…LGLV), 245–268 (QNLT…LNNL), 269–293 (TNLQ…SLTS), 295–314 (YTLD…SWIP), 316–340 (LNSL…LFSP), 342–365 (QLQT…NYSK), 367–387 (LDFV…ANNP), and 389–407 (NVML…QLSG). Residues N246, N267, and N287 are each glycosylated (N-linked (GlcNAc...) asparagine). N-linked (GlcNAc...) asparagine glycosylation is found at N354 and N362. N415, N460, N489, and N514 each carry an N-linked (GlcNAc...) asparagine glycan. A helical transmembrane segment spans residues 562–582 (VIIGVVVGVVVLLLLLALAGI). The Cytoplasmic portion of the chain corresponds to 583–946 (YALRQKKRAQ…YTGVFPTPKP (364 aa)). The region spanning 634–908 (FSDANDVGGG…EVVQELESIL (275 aa)) is the Protein kinase domain. ATP is bound by residues 640-648 (VGGGGYGQV) and K662. The Proton acceptor role is filled by D758. The segment at 919-946 (SATYEEASGDPYGRDSFEYTGVFPTPKP) is disordered.

It belongs to the protein kinase superfamily. Ser/Thr protein kinase family.

The protein localises to the membrane. It carries out the reaction L-seryl-[protein] + ATP = O-phospho-L-seryl-[protein] + ADP + H(+). The enzyme catalyses L-threonyl-[protein] + ATP = O-phospho-L-threonyl-[protein] + ADP + H(+). The polypeptide is Probable leucine-rich repeat receptor-like protein kinase At5g49770 (Arabidopsis thaliana (Mouse-ear cress)).